A 523-amino-acid chain; its full sequence is Polyamine aminopropyltransferase (523 aa).

7 consecutive transmembrane segments (helical) span residues 20-40 (VLLA…LALL), 51-71 (IVAT…GALL), 88-108 (AVLG…FAFL), 116-136 (LVLA…VPLL), 164-184 (LGAL…LGMI), 186-206 (GAAV…IFLL), and 215-235 (LVTA…LLVH). The interval 203 to 478 (IFLLRHVVSG…APTPAVPSTA (276 aa)) is spermidine synthase. Residues 231–465 (TLLVHSHDIE…GDWGFALARL (235 aa)) form the PABS domain. Gln-261 provides a ligand contact to S-methyl-5'-thioadenosine. Asp-313 is a spermidine binding site. Residues Glu-333 and 365–366 (DA) each bind S-methyl-5'-thioadenosine. The active-site Proton acceptor is Asp-386.

This sequence belongs to the spermidine/spermine synthase family. As to quaternary structure, homodimer or homotetramer.

It localises to the cell membrane. The catalysed reaction is S-adenosyl 3-(methylsulfanyl)propylamine + putrescine = S-methyl-5'-thioadenosine + spermidine + H(+). It participates in amine and polyamine biosynthesis; spermidine biosynthesis; spermidine from putrescine: step 1/1. Catalyzes the irreversible transfer of a propylamine group from the amino donor S-adenosylmethioninamine (decarboxy-AdoMet) to putrescine (1,4-diaminobutane) to yield spermidine. The polypeptide is Polyamine aminopropyltransferase (Mycobacterium bovis (strain ATCC BAA-935 / AF2122/97)).